We begin with the raw amino-acid sequence, 176 residues long: NADH-dependent flavin reductase (176 aa).

FAD is bound by residues 39-46 and 48-49; these read EDSVHGMT and NA. Ser-52 serves as a coordination point for NAD(+). FAD-binding positions include 63-65, 69-70, and 95-96; these read SIS, KM, and HF. NAD(+) contacts are provided by residues His-137 and 157-160; that span reads FYTG.

The protein belongs to the non-flavoprotein flavin reductase family. As to quaternary structure, homodimer. 4-nitrophenol 2-monooxygenase complex consists of an oxygenase component NphA1 and a flavin reductase component NphA2.

The enzyme catalyses a reduced flavin + NAD(+) = an oxidized flavin + NADH + 2 H(+). In terms of biological role, catalyzes the reduction of FAD with the concomitant oxidation of NADH. NAD is the physiological electron donor. Subsequently, the reduced flavins diffuse to the oxygenase component NphA2. The sequence is that of NADH-dependent flavin reductase (nphA2) from Rhodococcus sp.